The primary structure comprises 625 residues: Coagulation factor XI (625 aa).

Residues 1–18 (MTLLYQMVHFALFASVAG) form the signal peptide. 4 Apple domains span residues 20 to 103 (CVTT…SKQC), 110 to 193 (CSKD…LKSC), 200 to 283 (CIRD…LQHC), and 291 to 374 (CHSS…LRLC). Intrachain disulfides connect C20/C103, C46/C76, C50/C56, C110/C193, C136/C165, C140/C146, C200/C283, C226/C255, C230/C236, C291/C374, C317/C346, C321/C327, C380/C500, C416/C432, C514/C581, C545/C560, and C571/C599. Residues N90 and N126 are each glycosylated (N-linked (GlcNAc...) asparagine). A Peptidase S1 domain is found at 388–623 (IVGGTQSVHG…YVDWILEKTQ (236 aa)). The active-site Charge relay system is H431. N-linked (GlcNAc...) asparagine glycosylation is present at N450. D480 functions as the Charge relay system in the catalytic mechanism. An N-linked (GlcNAc...) asparagine glycan is attached at N491. 547–550 (AGYR) lines the heparin pocket. The active-site Charge relay system is the S575.

The protein belongs to the peptidase S1 family. Plasma kallikrein subfamily. As to quaternary structure, homodimer; disulfide-linked. After activation the heavy and light chains are also linked by a disulfide bond. Interacts (activated) with F9 (inactive and activated) in calcium-dependent manner. Forms a heterodimer with SERPINA5. Activated by factor XIIa (or XII), which cleaves each polypeptide after Arg-387 into the light chain, which contains the active site, and the heavy chain, which associates with high molecular weight (HMW) kininogen. Activated by F12 (activated); the presence of negatively charged surfaces accelerates activation. Activated by F2 (thrombin); the presence of negatively charged surfaces, such as polyphosphate and dextran sulfate, strongly accelerates activation. Autoactivated; the presence of negatively charged surfaces, such as polyphosphate and dextran sulfate, accelerates autoactivation and autolysis. In terms of processing, N-glycosylated on both chains. N-glycosylated sites mainly consist of nonfucosylated sialylated biantennary (in high abundance) and/or triantennary (in low abundance) complex structures.

The protein localises to the secreted. The enzyme catalyses Selective cleavage of Arg-|-Ala and Arg-|-Val bonds in factor IX to form factor IXa.. With respect to regulation, inhibited by SERPINA5. Its function is as follows. Factor XI triggers the middle phase of the intrinsic pathway of blood coagulation by activating factor IX. The polypeptide is Coagulation factor XI (F11) (Bos taurus (Bovine)).